A 917-amino-acid chain; its full sequence is Alanine--tRNA ligase (917 aa).

The Zn(2+) site is built by His615, His619, Cys719, and His723.

Belongs to the class-II aminoacyl-tRNA synthetase family. Zn(2+) is required as a cofactor.

The protein resides in the cytoplasm. It catalyses the reaction tRNA(Ala) + L-alanine + ATP = L-alanyl-tRNA(Ala) + AMP + diphosphate. Functionally, catalyzes the attachment of alanine to tRNA(Ala) in a two-step reaction: alanine is first activated by ATP to form Ala-AMP and then transferred to the acceptor end of tRNA(Ala). Also edits incorrectly charged Ser-tRNA(Ala) and Gly-tRNA(Ala) via its editing domain. The polypeptide is Alanine--tRNA ligase (Thermococcus kodakarensis (strain ATCC BAA-918 / JCM 12380 / KOD1) (Pyrococcus kodakaraensis (strain KOD1))).